Reading from the N-terminus, the 150-residue chain is Large ribosomal subunit protein bL9 (150 aa).

This sequence belongs to the bacterial ribosomal protein bL9 family.

Its function is as follows. Binds to the 23S rRNA. This chain is Large ribosomal subunit protein bL9, found in Idiomarina loihiensis (strain ATCC BAA-735 / DSM 15497 / L2-TR).